Reading from the N-terminus, the 232-residue chain is Large ribosomal subunit protein uL1 (232 aa).

This sequence belongs to the universal ribosomal protein uL1 family. As to quaternary structure, part of the 50S ribosomal subunit.

Its function is as follows. Binds directly to 23S rRNA. The L1 stalk is quite mobile in the ribosome, and is involved in E site tRNA release. Protein L1 is also a translational repressor protein, it controls the translation of the L11 operon by binding to its mRNA. This Chlamydia trachomatis serovar D (strain ATCC VR-885 / DSM 19411 / UW-3/Cx) protein is Large ribosomal subunit protein uL1.